We begin with the raw amino-acid sequence, 76 residues long: UPF0291 protein BA_1897/GBAA_1897/BAS1759 (76 aa).

It belongs to the UPF0291 family.

The protein resides in the cytoplasm. This chain is UPF0291 protein BA_1897/GBAA_1897/BAS1759, found in Bacillus anthracis.